Consider the following 78-residue polypeptide: Protein SlyX homolog (78 aa).

Belongs to the SlyX family.

The chain is Protein SlyX homolog from Photobacterium profundum (strain SS9).